We begin with the raw amino-acid sequence, 284 residues long: Protein pxr1 (284 aa).

Residues 25 to 71 (TNRLGFKLLSSYGWVNGNGLGEKQHGRIHNIKVSLKDDTLGIGAKAT) form the G-patch domain. Residues 149–253 (DEDRVCEDAS…KVKEGNRPAS (105 aa)) form a disordered region. Phosphoserine occurs at positions 159 and 160. Composition is skewed to basic residues over residues 166 to 181 (EKRK…KKKT) and 196 to 206 (TKKKKKEHKKK). 2 stretches are compositionally biased toward basic and acidic residues: residues 207 to 224 (DKES…DKEE) and 233 to 249 (KDKP…KEGN).

Belongs to the PINX1 family.

The protein localises to the nucleus. The protein resides in the nucleolus. In terms of biological role, involved in rRNA-processing at A0, A1 and A2 sites and negatively regulates telomerase. The chain is Protein pxr1 (pxr1) from Schizosaccharomyces pombe (strain 972 / ATCC 24843) (Fission yeast).